A 283-amino-acid chain; its full sequence is RNase adapter protein RapZ (283 aa).

8–15 (GRSGSGKS) is an ATP binding site. 56–59 (DVRN) is a GTP binding site. The tract at residues 266–283 (RSRGKNVQSRHRTLEKRK) is RNA-binding.

Belongs to the RapZ-like family. RapZ subfamily. As to quaternary structure, homotrimer.

Modulates the synthesis of GlmS, by affecting the processing and stability of the regulatory small RNA GlmZ. When glucosamine-6-phosphate (GlcN6P) concentrations are high in the cell, RapZ binds GlmZ and targets it to cleavage by RNase E. Consequently, GlmZ is inactivated and unable to activate GlmS synthesis. Under low GlcN6P concentrations, RapZ is sequestered and inactivated by an other regulatory small RNA, GlmY, preventing GlmZ degradation and leading to synthesis of GlmS. The chain is RNase adapter protein RapZ from Photorhabdus laumondii subsp. laumondii (strain DSM 15139 / CIP 105565 / TT01) (Photorhabdus luminescens subsp. laumondii).